The primary structure comprises 419 residues: Tryptophan synthase beta chain (419 aa).

Lys98 carries the N6-(pyridoxal phosphate)lysine modification.

This sequence belongs to the TrpB family. Tetramer of two alpha and two beta chains. The cofactor is pyridoxal 5'-phosphate.

It catalyses the reaction (1S,2R)-1-C-(indol-3-yl)glycerol 3-phosphate + L-serine = D-glyceraldehyde 3-phosphate + L-tryptophan + H2O. The protein operates within amino-acid biosynthesis; L-tryptophan biosynthesis; L-tryptophan from chorismate: step 5/5. The beta subunit is responsible for the synthesis of L-tryptophan from indole and L-serine. The protein is Tryptophan synthase beta chain of Ruegeria sp. (strain TM1040) (Silicibacter sp.).